A 404-amino-acid polypeptide reads, in one-letter code: Glucose-1-phosphate adenylyltransferase 2 (404 aa).

Residues Tyr97, Gly162, 177 to 178 (EK), and Ser195 contribute to the alpha-D-glucose 1-phosphate site.

This sequence belongs to the bacterial/plant glucose-1-phosphate adenylyltransferase family. Homotetramer.

The catalysed reaction is alpha-D-glucose 1-phosphate + ATP + H(+) = ADP-alpha-D-glucose + diphosphate. The protein operates within glycan biosynthesis; glycogen biosynthesis. Functionally, involved in the biosynthesis of ADP-glucose, a building block required for the elongation reactions to produce glycogen. Catalyzes the reaction between ATP and alpha-D-glucose 1-phosphate (G1P) to produce pyrophosphate and ADP-Glc. The protein is Glucose-1-phosphate adenylyltransferase 2 of Vibrio vulnificus (strain YJ016).